Here is a 388-residue protein sequence, read N- to C-terminus: Flap endonuclease 1 (388 aa).

Residues 1–105 (MGIKNLTSLI…GELAKRYARR (105 aa)) are N-domain. Residue Asp34 participates in Mg(2+) binding. Arg71 contacts DNA. Asp87, Glu159, Glu161, Asp180, and Asp182 together coordinate Mg(2+). An I-domain region spans residues 123-254 (DVQKFQKRTI…KKSFDMITKH (132 aa)). Glu159 provides a ligand contact to DNA. DNA is bound by residues Gly232 and Asp234. Mg(2+) is bound at residue Asp234. Residues 338 to 346 (VQTRIDTFF) are interaction with PCNA. Residues 349–388 (IKRPRDEDAGSAKKKQKTVAKPGAAGSKKKPAAKKAAGKK) are disordered. The span at 375-388 (SKKKPAAKKAAGKK) shows a compositional bias: basic residues.

Belongs to the XPG/RAD2 endonuclease family. FEN1 subfamily. In terms of assembly, interacts with PCNA. Three molecules of repG bind to one PCNA trimer with each molecule binding to one PCNA monomer. PCNA stimulates the nuclease activity without altering cleavage specificity. Mg(2+) is required as a cofactor. In terms of processing, phosphorylated. Phosphorylation upon DNA damage induces relocalization to the nuclear plasma.

Its subcellular location is the nucleus. The protein localises to the nucleolus. It is found in the nucleoplasm. The protein resides in the mitochondrion. Structure-specific nuclease with 5'-flap endonuclease and 5'-3' exonuclease activities involved in DNA replication and repair. During DNA replication, cleaves the 5'-overhanging flap structure that is generated by displacement synthesis when DNA polymerase encounters the 5'-end of a downstream Okazaki fragment. It enters the flap from the 5'-end and then tracks to cleave the flap base, leaving a nick for ligation. Also involved in the long patch base excision repair (LP-BER) pathway, by cleaving within the apurinic/apyrimidinic (AP) site-terminated flap. Acts as a genome stabilization factor that prevents flaps from equilibrating into structures that lead to duplications and deletions. Also possesses 5'-3' exonuclease activity on nicked or gapped double-stranded DNA, and exhibits RNase H activity. Also involved in replication and repair of rDNA and in repairing mitochondrial DNA. The polypeptide is Flap endonuclease 1 (Heterostelium pallidum (strain ATCC 26659 / Pp 5 / PN500) (Cellular slime mold)).